A 629-amino-acid chain; its full sequence is ATP-dependent RNA helicase DeaD (629 aa).

A Q motif motif is present at residues 6 to 34; the sequence is TTFADLGLKAPILEALNDLGYEKPSPIQA. Positions 37 to 208 constitute a Helicase ATP-binding domain; the sequence is IPHLLNGRDV…RRFMKEPQEV (172 aa). Position 50–57 (50–57) interacts with ATP; sequence AQTGSGKT. A DEAD box motif is present at residues 156–159; it reads DEAD. The Helicase C-terminal domain occupies 232–379; the sequence is KNEALVRFLE…EVELPNAELL (148 aa). Disordered stretches follow at residues 438-481 and 560-629; these read LIVP…RERR and LGDA…GGDA. Composition is skewed to basic and acidic residues over residues 446–481 and 568–629; these read MRPKREFRDRDDRGPRDRNDRGPRGDREDRPRRERR and GGER…GGDA.

It belongs to the DEAD box helicase family. DeaD/CsdA subfamily. Interacts with the 50S ribosomal subunit upon shifting to 15 degrees Celsius. Also found associated with the RNA degradosome at 15 degrees Celsius; binds RNase E (rne).

The protein resides in the cytoplasm. The enzyme catalyses ATP + H2O = ADP + phosphate + H(+). Functionally, DEAD-box RNA helicase involved in various cellular processes at low temperature, including ribosome biogenesis, mRNA degradation and translation initiation. Exhibits RNA-stimulated ATP hydrolysis and RNA unwinding activity at low temperature. Involved in 50S ribosomal subunit assembly, acting after SrmB, and could also play a role in the biogenesis of the 30S ribosomal subunit. In addition, is involved in mRNA decay, via formation of a cold-shock degradosome with RNase E. Also stimulates translation of some mRNAs, probably at the level of initiation. The protein is ATP-dependent RNA helicase DeaD of Escherichia coli (strain K12).